Consider the following 1388-residue polypeptide: Rho-associated protein kinase 2 (1388 aa).

Residues 1–27 (MSRPPPTGKMPGAPETAPGDGAGASRQ) are disordered. In terms of domain architecture, Protein kinase spans 92–354 (YDVVKVIGRG…VEEIRQHPFF (263 aa)). ATP-binding positions include 98-106 (IGRGAFGEV) and K121. The Proton acceptor role is filled by D214. Residues 357–425 (DQWHWDNIRE…YRENLLLSDS (69 aa)) enclose the AGC-kinase C-terminal domain. The interaction with PPP1R12A stretch occupies residues 363–784 (NIRETAAPVV…INELLKQKDV (422 aa)). The segment at 373–420 (PELSSDIDSSNFDDIEDDKGDVETFPIPKAFVGNQLPFIGFTYYRENL) is interaction with NPM1. Position 414 is a phosphothreonine; by ROCK2 (T414). 2 coiled-coil regions span residues 429–1024 (RETD…EKQL) and 1053–1131 (DTDV…IGLD). One can recognise an REM-1 domain in the interval 497-573 (ALRQLEREKA…LDETNALLRT (77 aa)). At Y722 the chain carries Phosphotyrosine; by SRC. The RhoBD domain maps to 979 to 1047 (TSDVANLANE…LAEIMNRKEP (69 aa)). The interval 979–1047 (TSDVANLANE…LAEIMNRKEP (69 aa)) is RHOA binding. S1137 is modified (phosphoserine). Residues 1150-1349 (ESRLEGWLSL…WVSRLVKKIP (200 aa)) enclose the PH domain. T1212 bears the Phosphothreonine mark. The segment at 1260 to 1315 (GHEFIPTLYHFPTNCEACMKPLWHMFKPPPALECRRCHIKCHKDHMDKKEEIIAPC) adopts a Phorbol-ester/DAG-type zinc-finger fold. The segment at 1345–1388 (VKKIPKKPPAPDPFARSSPRTSMKIQQNQSIRRPSRQLAPNKPS) is disordered. S1362 and S1374 each carry phosphoserine. A compositionally biased stretch (polar residues) spans 1362 to 1376 (SPRTSMKIQQNQSIR).

This sequence belongs to the protein kinase superfamily. AGC Ser/Thr protein kinase family. As to quaternary structure, homodimer. Interacts with IRS1. Interacts with RAF1. Interacts with RHOA (activated by GTP), RHOB and RHOC. Interacts with PPP1R12A. Interacts with EP300. Interacts with CHORDC1. Interacts with BRCA2. Interacts with NPM1; this interaction enhances ROCK2 activity. Interacts with SORL1. Interacts with PJVK. Requires Mg(2+) as cofactor. Phosphorylation at Tyr-722 reduces its binding to RHOA and is crucial for focal adhesion dynamics. Dephosphorylation by PTPN11 stimulates its RHOA binding activity. Post-translationally, cleaved by granzyme B during apoptosis. This leads to constitutive activation of the kinase and membrane blebbing. In terms of tissue distribution, expressed in the brain (at protein level).

Its subcellular location is the cytoplasm. The protein localises to the cell membrane. The protein resides in the nucleus. It localises to the cytoskeleton. It is found in the microtubule organizing center. Its subcellular location is the centrosome. The catalysed reaction is L-seryl-[protein] + ATP = O-phospho-L-seryl-[protein] + ADP + H(+). It catalyses the reaction L-threonyl-[protein] + ATP = O-phospho-L-threonyl-[protein] + ADP + H(+). Its activity is regulated as follows. Activated by RHOA binding. Inhibited by Y-27632. In terms of biological role, protein kinase which is a key regulator of actin cytoskeleton and cell polarity. Involved in regulation of smooth muscle contraction, actin cytoskeleton organization, stress fiber and focal adhesion formation, neurite retraction, cell adhesion and motility via phosphorylation of ADD1, BRCA2, CNN1, EZR, DPYSL2, EP300, MSN, MYL9/MLC2, NPM1, RDX, PPP1R12A and VIM. Phosphorylates SORL1 and IRF4. Acts as a negative regulator of VEGF-induced angiogenic endothelial cell activation. Positively regulates the activation of p42/MAPK1-p44/MAPK3 and of p90RSK/RPS6KA1 during myogenic differentiation. Plays an important role in the timely initiation of centrosome duplication. Inhibits keratinocyte terminal differentiation. May regulate closure of the eyelids and ventral body wall through organization of actomyosin bundles. Plays a critical role in the regulation of spine and synaptic properties in the hippocampus. Plays an important role in generating the circadian rhythm of the aortic myofilament Ca(2+) sensitivity and vascular contractility by modulating the myosin light chain phosphorylation. The sequence is that of Rho-associated protein kinase 2 (ROCK2) from Homo sapiens (Human).